The chain runs to 431 residues: Galactose-3-O-sulfotransferase 3 (431 aa).

Over 1-19 (MPPILQRLQQATKMMSRRK) the chain is Cytoplasmic. A helical; Signal-anchor for type II membrane protein membrane pass occupies residues 20–40 (ILLLVLGCSTVSLLIHQGAQL). Over 41–431 (SWYPKLFPLS…RVLPRGPQGP (391 aa)) the chain is Lumenal. N91, N110, N177, and N302 each carry an N-linked (GlcNAc...) asparagine glycan. Positions 399–431 (QKRRGGARARPEPVLDNPPPRPIRVLPRGPQGP) are disordered.

It belongs to the galactose-3-O-sulfotransferase family. It depends on Mg(2+) as a cofactor. Highly expressed in thyroid, brain, kidney, heart and spinal cord.

It localises to the golgi apparatus. It is found in the golgi stack membrane. It participates in protein modification; carbohydrate sulfation. In terms of biological role, transfers a sulfate to position 3 of non-reducing beta-galactosyl residues in N-glycans and core2-branched O-glycans. Has high activity towards Gal-beta-1,4-GlcNAc, Gal-beta-1,4(Fuc-alpha-1,3)GlcNAc and lower activity towards Gal-beta-1,3(Fuc-alpha-1,4)GlcNAc. The protein is Galactose-3-O-sulfotransferase 3 (GAL3ST3) of Homo sapiens (Human).